Consider the following 1347-residue polypeptide: MDLLSGTYIFAVLLACVVFHSGAQEKNYTIREEMPENVLIGDLLKDLNLSLIPNKSLTTAMQFKLVYKTGDVPLTRIEEDTGEIFTTGARIDREKLCAGIPRDEHCFYEVEVAILPDEIFRLVKIRFLIEDINDNAPLFPATVINISIPENSAINSKYTLPAAVDPDVGINGVQNYELIKSQNIFGLDVIETPEGDKMPQLIVQKELDREEKDTYVMKVKVEDGGFPQRSSTAILQVSVTDTNDNHPVFKETEIEVSIPENAPVGTSVTQLHATDADIGENAKIHFSFSNLVSNIARRLFHLNATTGLITIKEPLDREETPNHKLLVLASDGGLMPARAMVLVNVTDVNDNVPSIDIRYIVNPINDTVVLSENIPLNTKIALITVTDKDADHNGRVTCFTDHEIPFRLRPVFSNQFLLETAAYLDYESTKEYAIKLLAADAGKPPLNQSAMLFIKVKDENDNAPVFTQSFVTVSIPENNSPGIQLTKVSATDADSGPNAEINYLLGPDAPPEFSLDRRTGMLTVVKKLDREKEDKYLFTILAKDNGVPPLTSNVTVFVSIIDQNDNSPVFTHNEYNFYVPENLPRHGTVGLITVTDPDYGDNSAVTLSILDENDDFTIDSQTGVIRPNISFDREKQESYTFYVKAEDGGRVSRSSSAKVTINVVDVNDNKPVFIVPPSNYSYELVLPSTNPGTVVFQVIAVDNDTGMNAEVRYSIVGGNTRDLFAIDQETGNITLMEKCDVTDLGLHRVLVKANDLGQPDSLFSVVIVNLFVNESVTNATLINELVRKSIEAPVTPNTEIADVSSPTSDYVKILVAAVAGTVTVVVVIFITAVVRCRQAPHLKAAQKNKQNSEWATPNPENRQMIMMKKKKKKKKHSPKNLLLNFVTIEETKADDVDSDGNRITLDLPIDLEEQTMGKYNWVTTPTTFKPDSPDLARHYKSASPQPAFQIQPETPLNSKHHIIQELPLDNTFVACDSISKRSSSSSDPYSVSDCGYPVTTFEVPVSVHTRPPMKEVVRSCTPMKESTTMEIWIHPQPQRKSEGKGAGKSQRRVTFHLPEGSQESSSDGGLGEHDAGSLTSTSHGLPLGYPQEEYFDRATPSNRTEGDGNSDPESTFIPGLKKAAEITVQPTVEEASDNCTQECLIYGHSDACWMPASLDHSSSSQAQASALCHSPPLSQASTQHHSPPVTQTIALCHSPPVTQTIALCHSPPPIQVSALHHSPPLVQATALRHSPPSAQASALCYSPPLAQAAAISHSSPLPQVIALHRSQAQSSVSLQQGWVQGAEGLCSVDQGVQGSATSQFYTMSERLHPSDDSIKVIPLTTFTPRQQARPSRGDSPIMEEHPL.

Positions 1–23 (MDLLSGTYIFAVLLACVVFHSGA) are cleaved as a signal peptide. The Extracellular segment spans residues 24-812 (QEKNYTIREE…VSSPTSDYVK (789 aa)). Cadherin domains follow at residues 26 to 139 (KNYT…APLF), 140 to 249 (PATV…HPVF), 250 to 355 (KETE…VPSI), 362 to 466 (NPIN…APVF), 467 to 570 (TQSF…SPVF), 571 to 673 (THNE…KPVF), and 677 to 795 (PSNY…APVT). 3 N-linked (GlcNAc...) asparagine glycosylation sites follow: N27, N48, and N54. N344 carries N-linked (GlcNAc...) asparagine glycosylation. A glycan (N-linked (GlcNAc...) asparagine) is linked at N553. N-linked (GlcNAc...) asparagine glycosylation occurs at N773. Residues 813–833 (ILVAAVAGTVTVVVVIFITAV) traverse the membrane as a helical segment. Over 834-1347 (VRCRQAPHLK…DSPIMEEHPL (514 aa)) the chain is Cytoplasmic. Disordered regions lie at residues 1031 to 1050 (IWIH…GKSQ), 1057 to 1091 (LPEG…GYPQ), 1097 to 1116 (RATP…ESTF), and 1325 to 1347 (TFTP…EHPL).

It is found in the cell membrane. Potential calcium-dependent cell-adhesion protein. The sequence is that of Protocadherin-11 X-linked (PCDH11X) from Pongo pygmaeus (Bornean orangutan).